Reading from the N-terminus, the 436-residue chain is D-amino acid dehydrogenase (436 aa).

An FAD-binding site is contributed by 3-17 (IVVLGAGVVGVTSAY).

Belongs to the DadA oxidoreductase family. FAD serves as cofactor.

It carries out the reaction a D-alpha-amino acid + A + H2O = a 2-oxocarboxylate + AH2 + NH4(+). It participates in amino-acid degradation; D-alanine degradation; NH(3) and pyruvate from D-alanine: step 1/1. Functionally, oxidative deamination of D-amino acids. The sequence is that of D-amino acid dehydrogenase from Cereibacter sphaeroides (strain ATCC 17029 / ATH 2.4.9) (Rhodobacter sphaeroides).